The following is a 366-amino-acid chain: Aminomethyltransferase (366 aa).

This sequence belongs to the GcvT family. As to quaternary structure, the glycine cleavage system is composed of four proteins: P, T, L and H.

The catalysed reaction is N(6)-[(R)-S(8)-aminomethyldihydrolipoyl]-L-lysyl-[protein] + (6S)-5,6,7,8-tetrahydrofolate = N(6)-[(R)-dihydrolipoyl]-L-lysyl-[protein] + (6R)-5,10-methylene-5,6,7,8-tetrahydrofolate + NH4(+). In terms of biological role, the glycine cleavage system catalyzes the degradation of glycine. This Bacillus cereus (strain ATCC 10987 / NRS 248) protein is Aminomethyltransferase.